We begin with the raw amino-acid sequence, 216 residues long: Ribosomal RNA large subunit methyltransferase E (216 aa).

Residues Gly-60, Trp-62, Asp-80, Asp-96, and Asp-121 each coordinate S-adenosyl-L-methionine. Lys-161 acts as the Proton acceptor in catalysis.

The protein belongs to the class I-like SAM-binding methyltransferase superfamily. RNA methyltransferase RlmE family.

It localises to the cytoplasm. The enzyme catalyses uridine(2552) in 23S rRNA + S-adenosyl-L-methionine = 2'-O-methyluridine(2552) in 23S rRNA + S-adenosyl-L-homocysteine + H(+). Its function is as follows. Specifically methylates the uridine in position 2552 of 23S rRNA at the 2'-O position of the ribose in the fully assembled 50S ribosomal subunit. The chain is Ribosomal RNA large subunit methyltransferase E from Pseudomonas syringae pv. syringae (strain B728a).